The sequence spans 312 residues: Malate dehydrogenase (312 aa).

NAD(+) is bound by residues 12–17 (GAGFTG) and aspartate 36. Residues arginine 87 and arginine 93 each contribute to the substrate site. Residues asparagine 100 and 123 to 125 (LTN) each bind NAD(+). A substrate-binding site is contributed by asparagine 125. Serine 149 carries the phosphoserine modification. Arginine 156 serves as a coordination point for substrate. The active-site Proton acceptor is the histidine 180.

It belongs to the LDH/MDH superfamily. MDH type 3 family.

It catalyses the reaction (S)-malate + NAD(+) = oxaloacetate + NADH + H(+). Catalyzes the reversible oxidation of malate to oxaloacetate. This Bacillus cytotoxicus (strain DSM 22905 / CIP 110041 / 391-98 / NVH 391-98) protein is Malate dehydrogenase.